The sequence spans 899 residues: Solute carrier family 12 member 9 (899 aa).

The Cytoplasmic segment spans residues 1–42 (MANEHSPLLVHGVYSMMGNAEDSRGGSAGTGEASNPKTDPRK). A helical transmembrane segment spans residues 43–63 (LNTFFGVMVPTILSMFSIVLF). At 64 to 78 (LRTGFVVGHAGLLHG) the chain is on the extracellular side. A helical membrane pass occupies residues 79-99 (LLMLFVAYFIISLTILSICAI). At 100-125 (STNGAVEGGGAYFMISRSLGPEFGGS) the chain is on the cytoplasmic side. The chain crosses the membrane as a helical span at residues 126–146 (IGLMFYLAKVCACGVYVLGLV). Residues 147–175 (EAIMDVFGQDPGSSVAQGLRVLPQGYWYT) lie on the Extracellular side of the membrane. A helical membrane pass occupies residues 176–196 (VLYSSVVLLLCMLVCLVGAHI). The Cytoplasmic segment spans residues 197 to 201 (YAKAS). The helical transmembrane segment at 202 to 222 (FLILLVVTVSLISIIISPLIV) threads the bilayer. Topologically, residues 223-269 (SPQGFNITHTYGNNHSVTVSPSYTGFNSTTLKNNLGPRYSLDYSTNT) are extracellular. Residues asparagine 228, asparagine 236, and asparagine 249 are each glycosylated (N-linked (GlcNAc...) asparagine). The helical transmembrane segment at 270 to 290 (MMSFATVFAVMFTSCTGIMAG) threads the bilayer. Residues 291 to 306 (ANMSGELKNPSESIPK) lie on the Cytoplasmic side of the membrane. A helical membrane pass occupies residues 307-327 (GTIMAVAYTFTVYVLLYLLLS). Residues 328-350 (STCDRSLLLNDYAVFQRVNVWPP) lie on the Extracellular side of the membrane. Residues 351 to 371 (FVTIGVYCASLSAAMCSMIGA) traverse the membrane as a helical segment. At 372–373 (SR) the chain is on the cytoplasmic side. A helical transmembrane segment spans residues 374–394 (ILHALALDQLFGLPLAPAAVT). The Extracellular portion of the chain corresponds to 395-399 (SSSGN). A helical membrane pass occupies residues 400-420 (PWVSVLYTWALVQCTLFAGQL). Position 421 (asparagine 421) is a topological domain, cytoplasmic. A helical membrane pass occupies residues 422–442 (VIAGIVTVFYLLAYAAVDLAC). Topologically, residues 443–455 (LALEWASAPNFRP) are extracellular. A helical membrane pass occupies residues 456 to 476 (TFQFFSWHTCLLGIISCVVMM). Topologically, residues 477–487 (FVINPVYSSAS) are extracellular. A helical membrane pass occupies residues 488–510 (IVLLLLLLLFLHYRSPTSSWGYI). Residues 511–563 (SQALIFHQVRKYLLMLDSRKDHVKFWRPQVLLMVSNPRSSCQLICFVNQLKKG) lie on the Cytoplasmic side of the membrane. Residues 564 to 584 (GLFVLGHVQIGDLDVLPADPV) traverse the membrane as a helical segment. The Extracellular segment spans residues 585–749 (QPQYNFWLSL…NLLTPGSASY (165 aa)). Residues 750-770 (ADVGSLFLLQMACVLNMASGW) form a helical membrane-spanning segment. Residues 771–899 (RRARLRIFVC…GVTPVTCTEL (129 aa)) lie on the Cytoplasmic side of the membrane.

It belongs to the SLC12A transporter family.

It is found in the cell membrane. It localises to the lysosome membrane. Its function is as follows. Seems to correspond to a subunit of a multimeric transport system and thus, additional subunits may be required for its function. May play a role in lysosomal ion flux and osmoregulation. In Danio rerio (Zebrafish), this protein is Solute carrier family 12 member 9 (slc12a9).